We begin with the raw amino-acid sequence, 152 residues long: Deoxyuridine 5'-triphosphate nucleotidohydrolase (152 aa).

Substrate-binding positions include 62–64 (RSG), asparagine 75, and 79–81 (TVD).

The protein belongs to the dUTPase family. It depends on Mg(2+) as a cofactor.

It carries out the reaction dUTP + H2O = dUMP + diphosphate + H(+). The protein operates within pyrimidine metabolism; dUMP biosynthesis; dUMP from dCTP (dUTP route): step 2/2. Its function is as follows. This enzyme is involved in nucleotide metabolism: it produces dUMP, the immediate precursor of thymidine nucleotides and it decreases the intracellular concentration of dUTP so that uracil cannot be incorporated into DNA. In Leifsonia xyli subsp. xyli (strain CTCB07), this protein is Deoxyuridine 5'-triphosphate nucleotidohydrolase.